A 70-amino-acid polypeptide reads, in one-letter code: Protein SlyX homolog (70 aa).

The protein belongs to the SlyX family.

This is Protein SlyX homolog from Agrobacterium fabrum (strain C58 / ATCC 33970) (Agrobacterium tumefaciens (strain C58)).